The following is a 176-amino-acid chain: Peptide deformylase 1 (176 aa).

Positions 99 and 141 each coordinate Fe cation. Glu142 is a catalytic residue. A Fe cation-binding site is contributed by His145.

It belongs to the polypeptide deformylase family. Fe(2+) is required as a cofactor.

It catalyses the reaction N-terminal N-formyl-L-methionyl-[peptide] + H2O = N-terminal L-methionyl-[peptide] + formate. Removes the formyl group from the N-terminal Met of newly synthesized proteins. Requires at least a dipeptide for an efficient rate of reaction. N-terminal L-methionine is a prerequisite for activity but the enzyme has broad specificity at other positions. This Bordetella pertussis (strain Tohama I / ATCC BAA-589 / NCTC 13251) protein is Peptide deformylase 1.